Here is a 276-residue protein sequence, read N- to C-terminus: UPF0761 membrane protein APL_1950 (276 aa).

7 helical membrane-spanning segments follow: residues 33 to 53 (TLAI…FPIF), 90 to 110 (MGIV…QSID), 125 to 145 (IFIS…LAGG), 147 to 167 (IAIS…LLSF), 171 to 191 (LLQY…YWLV), 203 to 223 (LGAI…VWYI), and 239 to 259 (LPIM…GGLI).

Belongs to the UPF0761 family.

Its subcellular location is the cell inner membrane. The sequence is that of UPF0761 membrane protein APL_1950 from Actinobacillus pleuropneumoniae serotype 5b (strain L20).